The primary structure comprises 570 residues: MSVRAVGSRLFKHGRSLIQQFCKRDLNTTIGDKINAVSQATAAPSSLPKTQIPKNFALRNVGVQLGLQARRILIDNVLNRVTNSLSAELRKKATRRILFGDSAPFFALVGVSIASGTGILTKEEELEGVCWEIREAISKIKWQYYDIDESRFESNPITLNDLSLGKPIAKGTNGVVYSAKVKDDETDDNKYPFALKMMFNYDIQSNSMEILKAMYRETVPARMYYSNHDLNNWEIELANRRKHLPPHPNIVAIFSVFTDLIQELEGSKDLYPAALPPRLHPEGEGRNMSLFLLMKRYDCNLQSFLSTAPSTRTSLLLLAQLLEGVAHMTAHGIAHRDLKSDNLLLDTSEPESPILVISDFGCCLADKTNGLSLPYTSYEMDKGGNTALMAPEIICQKPGTFSVLNYSKADLWAVGAIAYEIFNCHNPFYGPSRLKNFNYKEGDLPKLPDEVPTVIQALVANLLKRNPNKRLDPEVAANVCQLFLWAPSTWLKPGLKVPTSGEILQWLLSLTTKVLCEGKINNKSFGEKFTRNWRRTYPEYLLISSFLCRAKLANVRNALHWIQENLPELD.

The transit peptide at 1–5 (MSVRA) directs the protein to the mitochondrion. Over 6 to 96 (VGSRLFKHGR…AELRKKATRR (91 aa)) the chain is Mitochondrial intermembrane. A helical transmembrane segment spans residues 97 to 120 (ILFGDSAPFFALVGVSIASGTGIL). The Cytoplasmic segment spans residues 121-570 (TKEEELEGVC…WIQENLPELD (450 aa)). A Protein kinase domain is found at 162-484 (LSLGKPIAKG…VAANVCQLFL (323 aa)). Lysine 196 contacts ATP. Phosphoserine; by autocatalysis is present on serine 205. Mg(2+) is bound at residue glutamate 217. ATP contacts are provided by lysine 295, tyrosine 297, and asparagine 300. Residue aspartate 337 is the Proton acceptor of the active site. Aspartate 341 contacts ATP. Asparagine 342 and aspartate 359 together coordinate Mg(2+). Residue aspartate 359 participates in ATP binding. Serine 377 is modified (phosphoserine; by autocatalysis). Threonine 386 carries the post-translational modification Phosphothreonine; by autocatalysis. Position 530 is a phosphothreonine (threonine 530).

Belongs to the protein kinase superfamily. Ser/Thr protein kinase family. The cofactor is Mg(2+). Post-translationally, proteolytically cleaved. In healthy cells, the precursor is continuously imported into mitochondria where it is proteolytically cleaved into its short form by the mitochondrial rhomboid protease rho-7 (TcasGA2_TC013516). The short form is then released into the cytosol where it rapidly undergoes proteasome-dependent degradation. In unhealthy cells, when cellular stress conditions lead to the loss of mitochondrial membrane potential, mitochondrial import is impaired leading to the precursor accumulating on the outer mitochondrial membrane (OMM). Autophosphorylated on Ser-205, which activates kinase activity and is required for substrate recognition. Loss of mitochondrial membrane potential results in the precursor accumulating on the outer mitochondrial membrane (OMM) where it is activated by autophosphorylation at Ser-205. Autophosphorylation is sufficient and essential for selective recruitment of park to depolarized mitochondria, likely via Pink1-dependent phosphorylation of polyubiquitin chains. Also autophosphorylated at Ser-377, Thr-386 and possibly Thr-530. Another report found evidence of autophosphorylation at Ser-154, Thr-186, Thr-218, Ser-267 and Thr-530, as well as a number of other minor sites, but determined that phosphorylation at these sites is not required for enzyme activity and may not occur in vivo.

Its subcellular location is the mitochondrion outer membrane. It is found in the mitochondrion inner membrane. It localises to the cytoplasm. The protein resides in the cytosol. It catalyses the reaction L-seryl-[protein] + ATP = O-phospho-L-seryl-[protein] + ADP + H(+). The catalysed reaction is L-threonyl-[protein] + ATP = O-phospho-L-threonyl-[protein] + ADP + H(+). Functionally, acts as a serine/threonine-protein kinase. Exhibits a substrate preference for proline at position P+1 and a general preference at several residues for basic residues such as arginine. Also exhibits moderate preferences for a phosphotyrosine at position P-3 and a tryptophan at P-5. Critical to mitochondrial homeostasis it mediates several pathways that maintain mitochondrial health and function. Protects against mitochondrial dysfunction during cellular stress by phosphorylating mitochondrial proteins such as park and likely Drp1, to coordinate mitochondrial quality control mechanisms that remove and replace dysfunctional mitochondrial components. Depending on the severity of mitochondrial damage and/or dysfunction, activity ranges from preventing apoptosis and stimulating mitochondrial biogenesis to regulating mitochondrial dynamics and eliminating severely damaged mitochondria via mitophagy. Appears to be particularly important in maintaining the physiology and function of cells with high energy demands that are undergoing stress or altered metabolic environment, including spermatids, muscle cells and neurons such as the dopaminergic (DA) neurons. Mediates the translocation and activation of park at the outer membrane (OMM) of dysfunctional/depolarized mitochondria. At the OMM of damaged mitochondria, phosphorylates pre-existing polyubiquitin chains, the Pink1-phosphorylated polyubiquitin then recruits park from the cytosol to the OMM where park is fully activated by phosphorylation at 'Ser-80' by Pink1. When cellular stress results in irreversible mitochondrial damage, functions with park to promote the clearance of dysfunctional and/or depolarized mitochondria by selective autophagy (mitophagy). The Pink1-park pathway also promotes fission and/or inhibits fusion of damaged mitochondria, by phosphorylating and thus promoting the park-dependent degradation of proteins involved in mitochondrial fusion/fission such as Marf, Opa1 and fzo. This prevents the refusion of unhealthy mitochondria with the mitochondrial network or initiates mitochondrial fragmentation facilitating their later engulfment by autophagosomes. Also likely to promote mitochondrial fission independently of park and Atg7-mediated mitophagy, via the phosphorylation and activation of Drp1. Regulates motility of damaged mitochondria by phosphorylating Miro which likely promotes its park-dependent degradation by the proteasome; in motor neurons, this inhibits mitochondrial intracellular anterograde transport along the axons which probably increases the chance of the mitochondria being eliminated in the soma. The Pink1-park pathway is also involved in mitochondrial regeneration processes such as promoting mitochondrial biogenesis, activating localized mitochondrial repair, promoting selective turnover of mitochondrial proteins and initiating the mitochondrial import of endogenous proteins. Involved in mitochondrial biogenesis by promoting the park-dependent ubiquitination of transcriptional repressor Paris which leads to its subsequent proteasomal degradation and allows activation of the transcription factor srl. Functions with park to promote localized mitochondrial repair by activating the translation of specific nuclear-encoded mitochondrial RNAs (nc-mtRNAs) on the mitochondrial surface, including several key electron transport chain component nc-mtRNAs. During oogenesis, phosphorylates and inactivates larp on the membrane of defective mitochondria, thus impairing local translation and mtDNA replication and consequently, reducing transmission of deleterious mtDNA mutations to the mature oocyte. Phosphorylates the mitochondrial acyl-CoA dehydrogenase Mcad, and appears to be important for maintaining fatty acid and amino acid metabolism via a mechanism that is independent of it's role in maintaining production of ATP. This Tribolium castaneum (Red flour beetle) protein is Serine/threonine-protein kinase Pink1, mitochondrial.